The primary structure comprises 506 residues: Galactose/methyl galactoside import ATP-binding protein MglA (506 aa).

2 ABC transporter domains span residues leucine 14–serine 249 and valine 264–leucine 506. Glycine 46–serine 53 serves as a coordination point for ATP.

It belongs to the ABC transporter superfamily. Galactose/methyl galactoside importer (TC 3.A.1.2.3) family. In terms of assembly, the complex is composed of one ATP-binding protein (MglA), two transmembrane proteins (MglC) and a solute-binding protein (MglB).

It is found in the cell inner membrane. It catalyses the reaction D-galactose(out) + ATP + H2O = D-galactose(in) + ADP + phosphate + H(+). The enzyme catalyses methyl beta-D-galactoside(out) + ATP + H2O = methyl beta-D-galactoside(in) + ADP + phosphate + H(+). Its function is as follows. Part of the ABC transporter complex MglABC involved in galactose/methyl galactoside import. Responsible for energy coupling to the transport system. The polypeptide is Galactose/methyl galactoside import ATP-binding protein MglA (Sodalis glossinidius (strain morsitans)).